The primary structure comprises 246 residues: Eukaryotic translation initiation factor 6 (246 aa).

Residues serine 174 and serine 175 each carry the phosphoserine; by CK1 modification.

It belongs to the eIF-6 family. Monomer. Associates with the 60S ribosomal subunit. In terms of processing, phosphorylation at Ser-174 and Ser-175 promotes nuclear export.

Its subcellular location is the cytoplasm. The protein resides in the nucleus. It is found in the nucleolus. In terms of biological role, binds to the 60S ribosomal subunit and prevents its association with the 40S ribosomal subunit to form the 80S initiation complex in the cytoplasm. Is also involved in ribosome biogenesis. Associates with pre-60S subunits in the nucleus and is involved in its nuclear export. The protein is Eukaryotic translation initiation factor 6 of Sordaria macrospora (strain ATCC MYA-333 / DSM 997 / K(L3346) / K-hell).